The primary structure comprises 277 residues: Urease accessory protein UreD (277 aa).

Belongs to the UreD family. As to quaternary structure, ureD, UreF and UreG form a complex that acts as a GTP-hydrolysis-dependent molecular chaperone, activating the urease apoprotein by helping to assemble the nickel containing metallocenter of UreC. The UreE protein probably delivers the nickel.

It is found in the cytoplasm. In terms of biological role, required for maturation of urease via the functional incorporation of the urease nickel metallocenter. This is Urease accessory protein UreD from Pseudomonas putida (strain GB-1).